We begin with the raw amino-acid sequence, 35 residues long: Probable L,D-transpeptidase ErfK/SrfK (35 aa).

The N-terminal stretch at 1-21 is a signal peptide; it reads MRRVKLLCTALMLLASHGALA.

This sequence belongs to the YkuD family.

It localises to the periplasm. It functions in the pathway cell wall biogenesis; peptidoglycan biosynthesis. This chain is Probable L,D-transpeptidase ErfK/SrfK (erfK), found in Klebsiella aerogenes (Enterobacter aerogenes).